Reading from the N-terminus, the 140-residue chain is Protein archease (140 aa).

D11, D139, and L140 together coordinate Ca(2+).

The protein belongs to the archease family.

Activates the tRNA-splicing ligase complex by facilitating the enzymatic turnover of catalytic subunit RtcB. Acts by promoting the guanylylation of RtcB, a key intermediate step in tRNA ligation. Can also alter the NTP specificity of RtcB such that ATP, dGTP or ITP is used efficiently. The chain is Protein archease from Methanopyrus kandleri (strain AV19 / DSM 6324 / JCM 9639 / NBRC 100938).